Here is a 323-residue protein sequence, read N- to C-terminus: Aldo-keto reductase family 1 member C4 (323 aa).

NADP(+) contacts are provided by residues 20 to 24 and Asp50; that span reads GFGTY. Tyr55 serves as the catalytic Proton donor. His117 contributes to the substrate binding site. NADP(+) contacts are provided by residues 166 to 167, Gln190, 216 to 221, and 270 to 280; these read SN, HSALGT, and KSYNEQRIREN.

The protein belongs to the aldo/keto reductase family. Monomer.

It is found in the cytoplasm. Its subcellular location is the cytosol. The enzyme catalyses chlordecone alcohol + NADP(+) = chlordecone + NADPH + H(+). It carries out the reaction a 3alpha-hydroxysteroid + NADP(+) = a 3-oxosteroid + NADPH + H(+). The catalysed reaction is a 3alpha-hydroxysteroid + NAD(+) = a 3-oxosteroid + NADH + H(+). It catalyses the reaction 5alpha-androstane-3alpha,17beta-diol + NADP(+) = 17beta-hydroxy-5alpha-androstan-3-one + NADPH + H(+). The enzyme catalyses 5alpha-androstane-3beta,17beta-diol + NADP(+) = 17beta-hydroxy-5alpha-androstan-3-one + NADPH + H(+). It carries out the reaction 5alpha-androstane-3alpha,17beta-diol + NAD(+) = 17beta-hydroxy-5alpha-androstan-3-one + NADH + H(+). The catalysed reaction is 17beta-estradiol + NADP(+) = estrone + NADPH + H(+). It catalyses the reaction 17beta-estradiol + NAD(+) = estrone + NADH + H(+). The enzyme catalyses (20S)-hydroxypregn-4-en-3-one + NADP(+) = progesterone + NADPH + H(+). It carries out the reaction (20S)-hydroxypregn-4-en-3-one + NAD(+) = progesterone + NADH + H(+). The catalysed reaction is androsterone + NADP(+) = 5alpha-androstan-3,17-dione + NADPH + H(+). It catalyses the reaction testosterone + NADP(+) = androst-4-ene-3,17-dione + NADPH + H(+). The enzyme catalyses testosterone + NAD(+) = androst-4-ene-3,17-dione + NADH + H(+). It carries out the reaction 3alpha-hydroxy-5alpha-androstane 17-O-(beta-D-glucuronate) + NADP(+) = 5alpha-dihydrotestosterone 17-O-(beta-D-glucuronate) + NADPH + H(+). The catalysed reaction is (3beta,5alpha,17beta)-3-hydroxy-androstan-17-yl sulfate + NADP(+) = 5alpha-dihydrotestosterone sulfate + NADPH + H(+). It catalyses the reaction 5alpha-androstane-3alpha,17beta-diol + NAD(+) = androsterone + NADH + H(+). The protein operates within steroid metabolism. In terms of biological role, cytosolic aldo-keto reductase that catalyzes the NADH and NADPH-dependent reduction of ketosteroids to hydroxysteroids. Liver specific enzyme that acts as an NAD(P)(H)-dependent 3-, 17- and 20-ketosteroid reductase on the steroid nucleus and side chain. Displays the ability to catalyze both oxidation and reduction in vitro, but most probably acts as a reductase in vivo since the oxidase activity measured in vitro is inhibited by physiological concentration of NADPH. Acts preferentially as a 3-alpha-hydroxysteroid dehydrogenase (HSD) with a subsidiary 3-beta-HSD activity. Catalyzes efficiently the transformation of the potent androgen 5-alpha-dihydrotestosterone (5alpha-DHT or 17beta-hydroxy-5alpha-androstan-3-one) into the less active form, 5-alpha-androstan-3-alpha,17-beta-diol (3-alpha-diol). Catalyzes the reduction of estrone into 17beta-estradiol but with low efficiency. Metabolizes a broad spectrum of natural and synthetic therapeutic steroid and plays an important role in metabolism of androgens, estrogens, progestereone and conjugated steroids. Catalyzes the biotransformation of the pesticide chlordecone (kepone) to its corresponding alcohol leading to increased biliary excretion of the pesticide and concomitant reduction of its neurotoxicity since bile is the major excretory route. This chain is Aldo-keto reductase family 1 member C4 (AKR1C4), found in Macaca fascicularis (Crab-eating macaque).